Reading from the N-terminus, the 401-residue chain is Imidazolonepropionase (401 aa).

Residues H66 and H68 each contribute to the Fe(3+) site. Zn(2+) contacts are provided by H66 and H68. 3 residues coordinate 4-imidazolone-5-propanoate: R75, Y138, and H171. Y138 serves as a coordination point for N-formimidoyl-L-glutamate. H236 contacts Fe(3+). Residue H236 participates in Zn(2+) binding. Q239 contacts 4-imidazolone-5-propanoate. Residue D311 coordinates Fe(3+). D311 provides a ligand contact to Zn(2+). The N-formimidoyl-L-glutamate site is built by N313 and G315. Residue T316 coordinates 4-imidazolone-5-propanoate.

The protein belongs to the metallo-dependent hydrolases superfamily. HutI family. Zn(2+) is required as a cofactor. It depends on Fe(3+) as a cofactor.

It localises to the cytoplasm. It catalyses the reaction 4-imidazolone-5-propanoate + H2O = N-formimidoyl-L-glutamate. It functions in the pathway amino-acid degradation; L-histidine degradation into L-glutamate; N-formimidoyl-L-glutamate from L-histidine: step 3/3. Catalyzes the hydrolytic cleavage of the carbon-nitrogen bond in imidazolone-5-propanoate to yield N-formimidoyl-L-glutamate. It is the third step in the universal histidine degradation pathway. The protein is Imidazolonepropionase of Acinetobacter baumannii (strain ATCC 17978 / DSM 105126 / CIP 53.77 / LMG 1025 / NCDC KC755 / 5377).